Reading from the N-terminus, the 352-residue chain is Sperm equatorial segment protein 1 (352 aa).

The first 19 residues, 1 to 19, serve as a signal peptide directing secretion; sequence MKSLVLLVALLLWSSSVPA. N128 carries N-linked (GlcNAc...) asparagine glycosylation. The disordered stretch occupies residues 140–203; sequence IEKEEPEPEP…TESEDVPQLS (64 aa). Polar residues predominate over residues 166-193; that stretch reads TESSTSPYVTSYKSPVTTSDRSTGIEIS.

This sequence belongs to the SPESP1 family. Post-translationally, glycosylated. In testis there are two predominant forms of 77- and 67-kDa and a form of 47-kDa, whereas in epididymal sperm from caput, corpus, and cauda there are two forms of 47- and 43-kDa. Testis forms contain complex carbohydrate residues. Epididymal sperm forms are N-glycosylated. Then undergoes significant glycosylation in the testis and that the majority of these glycoconjugates are removed by the time sperm reach the caput epididymis.

The protein resides in the cytoplasmic vesicle. It localises to the secretory vesicle. Its subcellular location is the acrosome. Involved in fertilization ability of sperm. This Macaca fascicularis (Crab-eating macaque) protein is Sperm equatorial segment protein 1.